We begin with the raw amino-acid sequence, 456 residues long: D-glycerate 3-kinase, chloroplastic (456 aa).

The transit peptide at Met-1 to Ser-63 directs the protein to the chloroplast. Ala-215–Thr-222 provides a ligand contact to ATP.

The protein belongs to the GLYK kinase family.

The protein localises to the plastid. The protein resides in the chloroplast. Its subcellular location is the cytoplasm. The catalysed reaction is (R)-glycerate + ATP = (2R)-3-phosphoglycerate + ADP + H(+). The protein operates within photosynthesis; photorespiration; 3-phospho-D-glycerate from glycine: step 4/4. Functionally, catalyzes the concluding reaction of the photorespiratory C2 cycle, an indispensable ancillary metabolic pathway to the photosynthetic C3 cycle that enables land plants to grow in an oxygen-containing atmosphere. Its function is as follows. Cytoplasmic D-glycerate 3-kinase that constitutes a photorespiratory bypass that alleviates fluctuating light-induced photoinhibition. This is D-glycerate 3-kinase, chloroplastic from Arabidopsis thaliana (Mouse-ear cress).